A 208-amino-acid chain; its full sequence is MARNLDPKCRQCRREGEKLFLKGEKCFTDKCAIERRNYAPGQHGQKSGRLSDYGVQLREKQKLRRIYGVLERQFRNGYELAERQRGVTGENLLQLLECRLDTVSYRMGFGASRSEARQIVRHNGILVNGRRINIPSYQVKPGDVIEVAEKAKNHLRIKASVEAAEQRHFPEWLEVDTKAMKGTFKNKPERSDLPSSINESLVIELYSK.

An S4 RNA-binding domain is found at 98–158 (CRLDTVSYRM…EKAKNHLRIK (61 aa)).

Belongs to the universal ribosomal protein uS4 family. Part of the 30S ribosomal subunit. Contacts protein S5. The interaction surface between S4 and S5 is involved in control of translational fidelity.

In terms of biological role, one of the primary rRNA binding proteins, it binds directly to 16S rRNA where it nucleates assembly of the body of the 30S subunit. With S5 and S12 plays an important role in translational accuracy. The polypeptide is Small ribosomal subunit protein uS4 (Nitrosospira multiformis (strain ATCC 25196 / NCIMB 11849 / C 71)).